A 312-amino-acid chain; its full sequence is Olfactory receptor 7D4 (312 aa).

Topologically, residues 1–25 (MEAENLTELSKFLLLGLSDDPELQP) are extracellular. Asn5 is a glycosylation site (N-linked (GlcNAc...) asparagine). The chain crosses the membrane as a helical span at residues 26 to 46 (VLFGLFLSMYLVTVLGNLLII). Residues 47-54 (LAVSSDSH) lie on the Cytoplasmic side of the membrane. A helical transmembrane segment spans residues 55-75 (LHTPMYFFLSNLSFVDICFIS). Over 76–99 (TTVPKMLVSIQARSKDISYMGCLT) the chain is Extracellular. Cys97 and Cys189 are oxidised to a cystine. The helical transmembrane segment at 100 to 120 (QVYFLMMFAGMDTFLLAVMAY) threads the bilayer. The Cytoplasmic portion of the chain corresponds to 121–139 (DRFVAICHPLHYTVIMNPC). Residues 140–160 (LCGLLVLASWFIIFWFSLVHI) form a helical membrane-spanning segment. Residues 161–197 (LLMKRLTFSTGTEIPHFFCEPAQVLKVACSNTLLNNI) are Extracellular-facing. Residues 198–217 (VLYVATALLGVFPVAGILFS) form a helical membrane-spanning segment. The Cytoplasmic segment spans residues 218–237 (YSQIVSSLMGMSSTKGKYKA). The chain crosses the membrane as a helical span at residues 238-258 (FSTCGSHLCVVSLFYGTGLGV). Topologically, residues 259-271 (YLSSAVTHSSQSS) are extracellular. A helical transmembrane segment spans residues 272-292 (STASVMYAMVTPMLNPFIYSL). The Cytoplasmic segment spans residues 293–312 (RNKDVKGALERLLSRADSCP).

The protein belongs to the G-protein coupled receptor 1 family. Nasal olfactory epithelium.

It is found in the cell membrane. Functionally, odorant receptor. Selectively activated by androstenone and the related odorous steroid androstadienone. The polypeptide is Olfactory receptor 7D4 (OR7D4) (Homo sapiens (Human)).